The primary structure comprises 523 residues: MNQAVRFRPVITFALAFLLLITWFAPRADAAAQWQAGTAYKKGDLVTYQNKDYECIQAHTALTGWEPSVVPALWKYVGEGSGGETPTPDTAPPSVPAGLTSSSITDTSVSLSWNASTDNVGVAGYEVYRNGVLVTSTSTTTAVVTGLTASTTYAFTVKAKDAAGNISAASTSLSVTTSNGSSNPGPTGTKWLIGYWHNFDNGSTNIRLRNVSTAYDVINVSFAEPISHGSGTLAFTPYNATVAEFKSDIAYLQSQGKKVLLSMGGANGTIELTDATKRQQFEDSLKSIISTYGFNGLDIDLEGSSLSLNAGDTDFRSPTTPKIVNLIQGVKAVKSHFGANFILTAAPETAYVQGGYLSYGGPWGAYLPVIHALRNELTLLHVQHYNTGSMVGLDGRSYAQGTADFHVAMAEMLLQGFHVGGSTGPFFSPLRPDQIAIGVPASQQAAGGGYTTPADLQKALNYLIKGVSYGGSYTLRQSTGYAGIKGIMTWSINWDAYTNNQFSSAHRPFLNGLSTQTTKEVVY.

A signal peptide spans 1 to 30; sequence MNQAVRFRPVITFALAFLLLITWFAPRADA. The tract at residues 80–101 is disordered; that stretch reads GSGGETPTPDTAPPSVPAGLTS. The 86-residue stretch at 95-180 folds into the Fibronectin type-III domain; the sequence is VPAGLTSSSI…TSLSVTTSNG (86 aa). Residues 190 to 513 form the GH18 domain; sequence KWLIGYWHNF…SAHRPFLNGL (324 aa). Glu302 acts as the Proton donor in catalysis.

It belongs to the glycosyl hydrolase 18 family. Chitinase class II subfamily.

It catalyses the reaction Random endo-hydrolysis of N-acetyl-beta-D-glucosaminide (1-&gt;4)-beta-linkages in chitin and chitodextrins.. Its activity is regulated as follows. Activity is inhibited by Cu(2+) and Co(2+), and almost completely inhibited by SDS. Functionally, acidic chitinase that displays a broad substrate specificity, showing the highest specific activity toward colloidal chitin, followed by ethylene glycol chitin and ball milled chitin, but exhibits no activity toward powdery chitin and chitosan. Hydrolyzes colloidal chitin and chitooligosaccharides with degree of polymerization 2-5 to release mainly N-acetyl chitobiose. Displays inhibition effects on the growth of some phytopathogenic fungi, including Alternaria alstroemeriae, Botrytis cinerea, Rhizoctonia solani, Sclerotinia sclerotiorum and Valsa mali. The protein is Chitinase Chi52 of Paenibacillus xylanexedens.